The primary structure comprises 219 residues: GTP-binding nuclear protein GSP1/CNR1 (219 aa).

Ser-2 carries the N-acetylserine modification. Ser-2 carries the post-translational modification Phosphoserine. Residues 9–173 enclose the Small GTPase Ran-type domain; sequence EVPTFKLVLV…LWLARKLAGN (165 aa). 20 to 27 is a GTP binding site; that stretch reads DGGTGKTT. The switch-I stretch occupies residues 39–47; it reads KKYIATIGV. GTP is bound by residues Gly-70, 124–127, and 152–154; these read NKVD and SAK. Positions 70–86 are switch-II; that stretch reads GQEKFGGLRDGYYINAQ.

It belongs to the small GTPase superfamily. Ran family. In terms of assembly, found in a nuclear export complex with RanGTP, exportin and pre-miRNA. Forms a complex with YRB1. Interacts with BUD5, CEX1, RRP12, SRM1, and DIS3/RRP44.

The protein resides in the nucleus. GTP-binding protein involved in nucleocytoplasmic transport. Required for the import of protein into the nucleus and also for RNA export. Essential for cell viability. By analogy with Ras, Ran may be activated when GTP is exchanged for bound GDP by RCC1 and inactivated when GTP is hydrolyzed by Ran upon activation by RanGAP1. This is GTP-binding nuclear protein GSP1/CNR1 (GSP1) from Saccharomyces cerevisiae (strain ATCC 204508 / S288c) (Baker's yeast).